Here is a 274-residue protein sequence, read N- to C-terminus: 2,3,4,5-tetrahydropyridine-2,6-dicarboxylate N-succinyltransferase (274 aa).

Substrate contacts are provided by Arg-104 and Asp-141.

This sequence belongs to the transferase hexapeptide repeat family. In terms of assembly, homotrimer.

It is found in the cytoplasm. It carries out the reaction (S)-2,3,4,5-tetrahydrodipicolinate + succinyl-CoA + H2O = (S)-2-succinylamino-6-oxoheptanedioate + CoA. It participates in amino-acid biosynthesis; L-lysine biosynthesis via DAP pathway; LL-2,6-diaminopimelate from (S)-tetrahydrodipicolinate (succinylase route): step 1/3. This Escherichia coli O139:H28 (strain E24377A / ETEC) protein is 2,3,4,5-tetrahydropyridine-2,6-dicarboxylate N-succinyltransferase.